A 443-amino-acid chain; its full sequence is CBL-interacting protein kinase 2 (443 aa).

Residues 13–267 (YEMGKLLGQG…MDKIMENPWF (255 aa)) enclose the Protein kinase domain. ATP is bound by residues 19-27 (LGQGTFAKV) and Lys42. The active-site Proton acceptor is the Asp135. Positions 153-182 (DFGLSALADCKRQDGLLHTTCGTPAYVAPE) are activation loop. The 28-residue stretch at 302-329 (TLEKKPSNLNAFDIISLSTGLDLSGMFE) folds into the NAF domain. The interval 333-362 (KKESKFTSTSTASTIISKIEDIAKGLRLKL) is PPI.

This sequence belongs to the protein kinase superfamily. CAMK Ser/Thr protein kinase family. SNF1 subfamily. Mn(2+) is required as a cofactor.

It catalyses the reaction L-seryl-[protein] + ATP = O-phospho-L-seryl-[protein] + ADP + H(+). The catalysed reaction is L-threonyl-[protein] + ATP = O-phospho-L-threonyl-[protein] + ADP + H(+). Functionally, CIPK serine-threonine protein kinases interact with CBL proteins. Binding of a CBL protein to the regulatory NAF domain of CIPK protein lead to the activation of the kinase in a calcium-dependent manner. The chain is CBL-interacting protein kinase 2 (CIPK2) from Oryza sativa subsp. japonica (Rice).